Reading from the N-terminus, the 4960-residue chain is Malformin synthetase mlfA (4960 aa).

The adenylation 1 stretch occupies residues 194 to 564 (ERHATNRPHS…CGRADTQVKL (371 aa)). Positions 705–778 (SRLEQEVQLA…EAASLAEVQE (74 aa)) constitute a Carrier 1 domain. At serine 739 the chain carries O-(pantetheine 4'-phosphoryl)serine. Residues 816–1247 (EDVFPCTTMQ…ALNTLSLLQA (432 aa)) form a condensation 1 region. The adenylation 2 stretch occupies residues 1275-1650 (DRWVTRQPEG…GRKDTQVKLR (376 aa)). The 78-residue stretch at 1777–1854 (TPASELERTL…HLAAEVGEPA (78 aa)) folds into the Carrier 2 domain. 2 disordered regions span residues 1855 to 1883 (GQSA…NDGV) and 1917 to 1943 (GGSS…KKNA). Composition is skewed to low complexity over residues 1857-1881 (SASS…STND) and 1919-1936 (SSSN…SSSS). Residues 1989 to 2404 (EDIYPATALQ…AVSCSDKETL (416 aa)) are condensation 2. An adenylation 3 region spans residues 2427–2819 (RRTPHAPAVC…IGRRDGQLKL (393 aa)). Residues 2955–3031 (RPVTSQEREM…QLICHINTIR (77 aa)) enclose the Carrier 3 domain. At serine 2992 the chain carries O-(pantetheine 4'-phosphoryl)serine. 2 condensation regions span residues 3049-3464 (VALA…FTFP) and 3520-3889 (SGYV…EQLV). Residues 3914–4304 (HNSRQAVCAW…VGRKDNQIKF (391 aa)) are adenylation 4. A Carrier 4 domain is found at 4438–4514 (MPSTAAERKM…DLSDQAKSLI (77 aa)). At serine 4475 the chain carries O-(pantetheine 4'-phosphoryl)serine. Residues 4551-4878 (DVLPTTSFQH…LQTIVQHQNN (328 aa)) are condensation 5.

The protein belongs to the NRP synthetase family.

It functions in the pathway secondary metabolite biosynthesis. Nonribosomal peptide synthetase; part of the gene cluster that mediates the biosynthesis of malformins, cyclic pentapeptides with a disulfide bond between 2 consecutive cysteins, that show potential anti-tumor as well as antimalarial and antitrypanosomal properties. The nonribosomal peptide synthetase mlfA is responsible of the formation of the cyclic pentapeptide. The malformin biosynthesis clusters in malformin-producing fungi also contain enzymes involved in the formation of the disulfide bond between the two consecutive cysteins within malformins, in addition to additional tailoring enzymes such as methyltransferases or oxidoreductases. They are also composed of up to 4 major facilitator superfamily transporters, and transcription factors probably involved in the regulation of the expression of those clusters. The chain is Malformin synthetase mlfA from Aspergillus neoniger (strain CBS 115656).